Here is a 149-residue protein sequence, read N- to C-terminus: Protein SprT-like (149 aa).

The SprT-like domain maps to 6-147 (LQKLTEDISL…CGKCRGKIKR (142 aa)). Position 67 (His-67) interacts with Zn(2+). Residue Glu-68 is part of the active site. Zn(2+) is bound at residue His-71.

This sequence belongs to the SprT family. Zn(2+) serves as cofactor.

The protein resides in the cytoplasm. The polypeptide is Protein SprT-like (Bacillus velezensis (strain DSM 23117 / BGSC 10A6 / LMG 26770 / FZB42) (Bacillus amyloliquefaciens subsp. plantarum)).